The following is a 323-amino-acid chain: ComG operon protein 2 (323 aa).

3 helical membrane passes run 93 to 113, 143 to 163, and 296 to 316; these read YPLF…SIII, LVII…WLVF, and MIYG…LVPM.

The protein belongs to the GSP F family.

It is found in the cell membrane. Functionally, required for transformation and DNA binding. This is ComG operon protein 2 (comGB) from Bacillus subtilis (strain 168).